The chain runs to 76 residues: Acyl carrier protein (76 aa).

The region spanning 1–75 (MVFEKIKALI…DIVFYITKNT (75 aa)) is the Carrier domain. An O-(pantetheine 4'-phosphoryl)serine modification is found at serine 35.

It belongs to the acyl carrier protein (ACP) family. In terms of processing, 4'-phosphopantetheine is transferred from CoA to a specific serine of apo-ACP by AcpS. This modification is essential for activity because fatty acids are bound in thioester linkage to the sulfhydryl of the prosthetic group.

The protein resides in the cytoplasm. It participates in lipid metabolism; fatty acid biosynthesis. In terms of biological role, carrier of the growing fatty acid chain in fatty acid biosynthesis. The chain is Acyl carrier protein from Onion yellows phytoplasma (strain OY-M).